The sequence spans 548 residues: GLC7-interacting protein 2 (548 aa).

The span at 1–23 shows a compositional bias: basic and acidic residues; sequence MYIKAEQKPQQFERKNEKLDRNK. Disordered stretches follow at residues 1 to 54 and 118 to 143; these read MYIK…STEE and VESL…STVP. The residue at position 51 (serine 51) is a Phosphoserine. Threonine 52 is modified (phosphothreonine). Phosphoserine is present on serine 155. The interval 191–212 is disordered; sequence RSKSLPTTPGIRSGNGVQARDG. Phosphoserine occurs at positions 221 and 238. Positions 293-346 are disordered; sequence FAHPAKISNPNNGKGTNNTKLRKSKRFQNLLKNRTDMPPSKSNKKFVNGGGAHE. Residues 419-534 form the CBM21 domain; it reads HNGNDCNGVA…NNNGNNYKVD (116 aa).

In terms of assembly, interacts with phosphatase 1 (GLC7).

This is GLC7-interacting protein 2 (GIP2) from Saccharomyces cerevisiae (strain ATCC 204508 / S288c) (Baker's yeast).